The chain runs to 92 residues: MKSVELGPRARRDLTKLRRWLLNRAPSAADRAIDLILSRAEQLAQHSDLGRRKSQNMRELYVSFGAHGYVLQYRVYPDAVVIARIRHSLERR.

This sequence belongs to the RelE toxin family.

Its function is as follows. Toxic component of a type II toxin-antitoxin (TA) system. Its toxic effect is neutralized by coexpression with cognate antitoxin RelB3 but no other ParD or RelB antitoxin. The chain is Toxin RelE3 (relE3) from Caulobacter vibrioides (strain ATCC 19089 / CIP 103742 / CB 15) (Caulobacter crescentus).